An 88-amino-acid chain; its full sequence is Small ribosomal subunit protein bS20 (88 aa).

A disordered region spans residues 1 to 21 (MANTTSAKKATRKIARRTAVN).

Belongs to the bacterial ribosomal protein bS20 family.

Functionally, binds directly to 16S ribosomal RNA. The polypeptide is Small ribosomal subunit protein bS20 (Agrobacterium fabrum (strain C58 / ATCC 33970) (Agrobacterium tumefaciens (strain C58))).